A 439-amino-acid chain; its full sequence is Exodeoxyribonuclease 7 large subunit (439 aa).

Belongs to the XseA family. Heterooligomer composed of large and small subunits.

The protein localises to the cytoplasm. It carries out the reaction Exonucleolytic cleavage in either 5'- to 3'- or 3'- to 5'-direction to yield nucleoside 5'-phosphates.. Functionally, bidirectionally degrades single-stranded DNA into large acid-insoluble oligonucleotides, which are then degraded further into small acid-soluble oligonucleotides. In Haemophilus influenzae (strain 86-028NP), this protein is Exodeoxyribonuclease 7 large subunit.